A 293-amino-acid polypeptide reads, in one-letter code: Small ribosomal subunit protein uS2 (293 aa).

Residues 265-293 are disordered; the sequence is DGGDWAASSAPAPGGENWAEAQPAEGAKW.

It belongs to the universal ribosomal protein uS2 family. Component of the small ribosomal subunit. Mature ribosomes consist of a small (40S) and a large (60S) subunit. The 40S subunit contains about 33 different proteins and 1 molecule of RNA (18S). The 60S subunit contains about 49 different proteins and 3 molecules of RNA (25S, 5.8S and 5S). Interacts with rps21.

It localises to the cytoplasm. Its function is as follows. Required for the assembly and/or stability of the 40S ribosomal subunit. Required for the processing of the 20S rRNA-precursor to mature 18S rRNA in a late step of the maturation of 40S ribosomal subunits. The polypeptide is Small ribosomal subunit protein uS2 (rps0) (Emericella nidulans (strain FGSC A4 / ATCC 38163 / CBS 112.46 / NRRL 194 / M139) (Aspergillus nidulans)).